The following is a 1342-amino-acid chain: DNA-directed RNA polymerase subunit beta (1342 aa).

It belongs to the RNA polymerase beta chain family. As to quaternary structure, the RNAP catalytic core consists of 2 alpha, 1 beta, 1 beta' and 1 omega subunit. When a sigma factor is associated with the core the holoenzyme is formed, which can initiate transcription.

The catalysed reaction is RNA(n) + a ribonucleoside 5'-triphosphate = RNA(n+1) + diphosphate. Its function is as follows. DNA-dependent RNA polymerase catalyzes the transcription of DNA into RNA using the four ribonucleoside triphosphates as substrates. The polypeptide is DNA-directed RNA polymerase subunit beta (Yersinia pestis bv. Antiqua (strain Angola)).